The chain runs to 78 residues: Defensin-like protein 287 (78 aa).

The N-terminal stretch at 1 to 24 (MNNLRVIMSVLLAVLVFTATVSES) is a signal peptide. Disulfide bonds link C39–C59, C45–C64, and C51–C66.

This sequence belongs to the DEFL family.

The protein resides in the secreted. The chain is Defensin-like protein 287 from Arabidopsis thaliana (Mouse-ear cress).